A 2089-amino-acid chain; its full sequence is Mediator of DNA damage checkpoint protein 1 (2089 aa).

A compositionally biased stretch (acidic residues) spans 1-19 (MEDTQAIDWDVEEEEETEQ). The disordered stretch occupies residues 1 to 22 (MEDTQAIDWDVEEEEETEQSSE). Positions 1–150 (MEDTQAIDWD…SRGPLTVEET (150 aa)) are interaction with CHEK2. The interval 2–220 (EDTQAIDWDV…PFAFNLNSDT (219 aa)) is interaction with the MRN complex. Position 4 is a phosphothreonine; by ATM (Thr4). In terms of domain architecture, FHA spans 54–105 (NVVGRMPDCSVALPFPSISKQHAEIEILAWDKAPILRDCGSLNGTQILRPPK). Ser108 is subject to Phosphoserine. A required for nuclear localization (NLS1) region spans residues 145–568 (LTVEETPRVQ…PAKLLVVSLE (424 aa)). Phosphothreonine is present on Thr146. Ser168 carries the phosphoserine; by CK2 modification. Phosphoserine is present on Ser176. 3 disordered regions span residues 185–248 (RTTS…AKQS), 261–280 (DQPL…GAGN), and 286–317 (GVIL…AEVH). Residues Ser196 and Ser218 each carry the phosphoserine; by CK2 modification. Phosphothreonine; by CK2 is present on Thr220. Residues 261–274 (DQPLVKERDNDTKV) are compositionally biased toward basic and acidic residues. At Ser299 the chain carries Phosphoserine; by CK2. Position 301 is a phosphothreonine; by CK2 (Thr301). Positions 306–317 (DSRPPGRPAEVH) are enriched in basic and acidic residues. Residue Ser329 is modified to Phosphoserine; by CK2. At Thr331 the chain carries Phosphothreonine; by CK2. Position 372 is a phosphoserine (Ser372). Ser376 carries the phosphoserine; by CK2 modification. The residue at position 378 (Thr378) is a Phosphothreonine; by CK2. 2 positions are modified to phosphoserine: Ser394 and Ser397. Phosphoserine; by CK2 is present on Ser402. At Thr404 the chain carries Phosphothreonine; by CK2. Residue Ser411 is modified to Phosphoserine. Thr449 carries the phosphothreonine modification. Residue Ser453 is modified to Phosphoserine; by CK2. Thr455 bears the Phosphothreonine; by CK2 mark. Residues 482-515 (RAHSEKDQPPFGDSDDSVEADKSSPGIHLERSQA) are disordered. Ser485, Ser495, Ser498, Ser504, Ser505, and Ser513 each carry phosphoserine. A Phosphothreonine modification is found at Thr523. Ser590 is subject to Phosphoserine. Residue Lys616 forms a Glycyl lysine isopeptide (Lys-Gly) (interchain with G-Cter in SUMO1); alternate linkage. Lys616 participates in a covalent cross-link: Glycyl lysine isopeptide (Lys-Gly) (interchain with G-Cter in SUMO2); alternate. Disordered stretches follow at residues 653–689 (DTLG…DNYG) and 780–1887 (SPPR…TKLN). Over residues 671 to 685 (GREREQHVGGTKDSE) the composition is skewed to basic and acidic residues. Phosphoserine is present on residues Ser780 and Ser793. Lys812 is modified (N6-acetyllysine). Composition is skewed to basic and acidic residues over residues 819 to 844 (ETAE…ERQT), 851 to 862 (ELTKGKQDREQK), 868 to 905 (DTQR…EKQV), and 914 to 951 (AFER…RGEP). Phosphoserine is present on residues Ser955 and Ser998. A compositionally biased stretch (polar residues) spans 955–965 (SQDQKGQASSP). Residues 1016-1031 (KASRIRAAEKVSRGDQ) are compositionally biased toward basic and acidic residues. Ser1033 carries the post-translational modification Phosphoserine. Pro residues predominate over residues 1040 to 1051 (PTVPEAPAPPQK). Phosphoserine occurs at positions 1068 and 1086. Positions 1103 to 1113 (PKPKIRTRKSS) are enriched in basic residues. The segment covering 1129–1156 (PSTSTAQPVTPKPTSQATRSRTNRSSVK) has biased composition (polar residues). An interaction with the PRKDC complex region spans residues 1148 to 1610 (SRTNRSSVKT…TNRSSVKTPE (463 aa)). Thr1157 carries the post-translational modification Phosphothreonine. Positions 1169 to 1187 (QPSTSTDQPVTSEPTSQVT) are enriched in polar residues. Thr1198 bears the Phosphothreonine mark. A compositionally biased stretch (polar residues) spans 1210-1228 (QPSTSTDRPVTSEPTSQAT). The residue at position 1235 (Ser1235) is a Phosphoserine. Residue Thr1239 is modified to Phosphothreonine. The span at 1251–1268 (QPSTSTDQPVTSEPTYQA) shows a compositional bias: polar residues. Phosphothreonine is present on residues Thr1280 and Thr1302. Composition is skewed to low complexity over residues 1304–1318 (KPTS…NMSS) and 1347–1359 (TSRT…NMSS). The segment covering 1375 to 1391 (PSTSTEQPVTPEPTSRA) has biased composition (polar residues). 2 positions are modified to phosphoserine: Ser1399 and Ser1400. An N6-acetyllysine modification is found at Lys1402. Residue Thr1403 is modified to Phosphothreonine. Residue Lys1413 forms a Glycyl lysine isopeptide (Lys-Gly) (interchain with G-Cter in SUMO1); alternate linkage. Residue Lys1413 forms a Glycyl lysine isopeptide (Lys-Gly) (interchain with G-Cter in SUMO2); alternate linkage. Composition is skewed to polar residues over residues 1416-1444 (PSTS…SVKT), 1456-1475 (QPST…QATR), 1498-1514 (ASAS…TSRT), and 1538-1555 (QPST…TSRA). Residues Thr1425 and Thr1466 each carry the phosphothreonine modification. Thr1548 bears the Phosphothreonine mark. Phosphoserine is present on Ser1564. Phosphothreonine occurs at positions 1567 and 1589. Residues 1579 to 1596 (QPSTSRNQLVTPEPTSRA) show a composition bias toward polar residues. Ser1604 carries the post-translational modification Phosphoserine. At Thr1608 the chain carries Phosphothreonine. The span at 1611-1620 (PVVPTAPEPH) shows a compositional bias: pro residues. The span at 1624–1636 (STDQPVTPKLTSR) shows a compositional bias: polar residues. Phosphothreonine occurs at positions 1630, 1664, and 1671. Over residues 1678-1689 (GGQSKTLRSSTV) the composition is skewed to polar residues. A Phosphoserine modification is found at Ser1681. Phosphothreonine is present on Thr1697. Residues 1698–1719 (PEFQSPVTTDQPISPEPITQPS) are compositionally biased toward polar residues. The tract at residues 1698-2089 (PEFQSPVTTD…VLSPLEMSST (392 aa)) is required for nuclear localization (NLS2). A phosphoserine mark is found at Ser1702 and Ser1711. Residue Lys1740 forms a Glycyl lysine isopeptide (Lys-Gly) (interchain with G-Cter in SUMO2) linkage. The residue at position 1775 (Ser1775) is a Phosphoserine. Residue Lys1790 forms a Glycyl lysine isopeptide (Lys-Gly) (interchain with G-Cter in SUMO2) linkage. At Thr1800 the chain carries Phosphothreonine. Phosphoserine is present on Ser1820. The segment covering 1823–1836 (HQKQPQRGEVSQKT) has biased composition (polar residues). Lys1840 is covalently cross-linked (Glycyl lysine isopeptide (Lys-Gly) (interchain with G-Cter in SUMO1); alternate). Lys1840 participates in a covalent cross-link: Glycyl lysine isopeptide (Lys-Gly) (interchain with G-Cter in SUMO2); alternate. The span at 1847 to 1857 (AEKPGKEEDVV) shows a compositional bias: basic and acidic residues. The residue at position 1858 (Thr1858) is a Phosphothreonine. 2 BRCT domains span residues 1892-1970 (APKV…EYVV) and 1991-2082 (RERR…FVLS). Omega-N-methylarginine is present on Arg1943.

In terms of assembly, homodimer. Interacts with H2AX, which requires phosphorylation of H2AX on 'Ser-139'. Interacts with the MRN complex, composed of MRE11, RAD50, and NBN. Interacts with CHEK2, which requires ATM-mediated phosphorylation of 'Thr-68' within the FHA domain of CHEK2. Interacts constitutively with the BRCA1-BARD1 complex, SMC1A and TP53BP1. Interacts with ATM and FANCD2, and these interactions are reduced upon DNA damage. Also interacts with the PRKDC complex, composed of XRCC6/KU70, XRCC5/KU80 and PRKDC/XRCC7. This interaction may be required for PRKDC autophosphorylation, which is essential for DNA double strand break (DSB) repair. When phosphorylated by ATM, interacts with RNF8 (via FHA domain). Interacts with CEP164. When phosphorylated, interacts with APTX (via FHA-like domain). Interacts (when phosphorylated) with TOPBP1; promoting TOPBP1 localization to DNA damage sites during mitosis. Interacts (when phosphorylated) with NBN; promoting NBN and MRN complex localization to DNA damage sites. Post-translationally, phosphorylated upon exposure to ionizing radiation (IR), ultraviolet radiation (UV), and hydroxyurea (HU). Phosphorylation in response to IR requires ATM, NBN, and possibly CHEK2. Also phosphorylated during the G2/M phase of the cell cycle and during activation of the mitotic spindle checkpoint. Phosphorylation at Thr-4 by ATM stabilizes and enhances homodimerization via the FHA domain. Phosphorylated at Ser-168 and Ser-196 by CK2 in response to DNA damage during mitosis, promoting interaction with TOPBP1. Phosphorylated by CK2 in response to DNA damage, promoting interaction with NBN and recruitment of the MRN complex to DNA damage sites. In terms of processing, sumoylation at Lys-1840 by PIAS4 following DNA damage promotes ubiquitin-mediated degradation. Ubiquitinated by RNF4, leading to proteasomal degradation; undergoes 'Lys-48'-linked polyubiquitination. In terms of tissue distribution, highly expressed in testis.

It localises to the nucleus. Its subcellular location is the chromosome. Its function is as follows. Histone reader protein required for checkpoint-mediated cell cycle arrest in response to DNA damage within both the S phase and G2/M phases of the cell cycle. Specifically recognizes and binds histone H2AX phosphorylated at 'Ser-139', a marker of DNA damage, serving as a scaffold for the recruitment of DNA repair and signal transduction proteins to discrete foci of DNA damage sites. Also required for downstream events subsequent to the recruitment of these proteins. These include phosphorylation and activation of the ATM, CHEK1 and CHEK2 kinases, and stabilization of TP53/p53 and apoptosis. ATM and CHEK2 may also be activated independently by a parallel pathway mediated by TP53BP1. Required for chromosomal stability during mitosis by promoting recruitment of TOPBP1 to DNA double strand breaks (DSBs): TOPBP1 forms filamentous assemblies that bridge MDC1 and tether broken chromosomes during mitosis. Required for the repair of DSBs via homologous recombination by promoting recruitment of NBN component of the MRN complex to DSBs. In Homo sapiens (Human), this protein is Mediator of DNA damage checkpoint protein 1.